A 690-amino-acid polypeptide reads, in one-letter code: Translation initiation factor IF-2 (690 aa).

A tr-type G domain is found at 178–346; the sequence is PRPPVVTVMG…MILLVAEMNE (169 aa). The G1 stretch occupies residues 187-194; it reads GHVDHGKT. 187 to 194 serves as a coordination point for GTP; sequence GHVDHGKT. Residues 212 to 216 form a G2 region; that stretch reads GITQS. The tract at residues 233–236 is G3; that stretch reads DTPG. Residues 233–237 and 287–290 contribute to the GTP site; these read DTPGH and NKID. A G4 region spans residues 287 to 290; that stretch reads NKID. The G5 stretch occupies residues 324 to 326; it reads SAR.

Belongs to the TRAFAC class translation factor GTPase superfamily. Classic translation factor GTPase family. IF-2 subfamily.

It localises to the cytoplasm. In terms of biological role, one of the essential components for the initiation of protein synthesis. Protects formylmethionyl-tRNA from spontaneous hydrolysis and promotes its binding to the 30S ribosomal subunits. Also involved in the hydrolysis of GTP during the formation of the 70S ribosomal complex. The chain is Translation initiation factor IF-2 from Thermotoga sp. (strain RQ2).